The following is a 489-amino-acid chain: 3-octaprenyl-4-hydroxybenzoate carboxy-lyase (489 aa).

N172 lines the Mn(2+) pocket. Prenylated FMN is bound by residues 175–177 (IYR), 189–191 (RWL), and 194–195 (RG). Mn(2+) is bound at residue E238. The active-site Proton donor is the D287.

Belongs to the UbiD family. Homohexamer. It depends on prenylated FMN as a cofactor. Mn(2+) serves as cofactor.

Its subcellular location is the cell membrane. The catalysed reaction is a 4-hydroxy-3-(all-trans-polyprenyl)benzoate + H(+) = a 2-(all-trans-polyprenyl)phenol + CO2. Its pathway is cofactor biosynthesis; ubiquinone biosynthesis. Catalyzes the decarboxylation of 3-octaprenyl-4-hydroxy benzoate to 2-octaprenylphenol, an intermediate step in ubiquinone biosynthesis. This chain is 3-octaprenyl-4-hydroxybenzoate carboxy-lyase, found in Salmonella paratyphi B (strain ATCC BAA-1250 / SPB7).